A 485-amino-acid chain; its full sequence is Peroxisomal catalase (485 aa).

Active-site residues include histidine 53 and asparagine 126. Tyrosine 336 lines the heme pocket.

Belongs to the catalase family. As to quaternary structure, homotetramer. Requires heme as cofactor.

It is found in the peroxisome matrix. The enzyme catalyses 2 H2O2 = O2 + 2 H2O. In terms of biological role, catalyzes the degradation of hydrogen peroxide (H(2)O(2)) generated by peroxisomal oxidases to water and oxygen, thereby protecting cells from the toxic effects of hydrogen peroxide. In Candida albicans (strain SC5314 / ATCC MYA-2876) (Yeast), this protein is Peroxisomal catalase (CAT1).